The following is a 424-amino-acid chain: MKLIKNGKVLQNGELQQADILIDGKVIKQIAPAIEPSNGVDIIDAKGHFVSPGFVDVHVHLREPGGEYKETIETGTKAAARGGFTTVCPMPNTRPVPDSVEHFEALQKLIDDNAQVRVLPYASITTRQLGKELVDFPALVKEGAFAFTDDGVGVQTASMMYEGMIEAAKVNKAIVAHCEDNSLIYGGAMHEGKRSKELGIPGIPNICESVQIARDVLLAEAAGCHYHVCHVSTKESVRVIRDAKRAGIHVTAEVTPHHLLLTEDDIPGNNAIYKMNPPLRSTEDREALLEGLLDGTIDCIATDHAPHARDEKAQPMEKAPFGIVGSETAFPLLYTHFVKNGDWTLQQLVDYLTIKPCETFNLEYGTLKENGYADLTIIDLDSEQEIKGEDFLSKADNTPFIGYKVYGNPILTMVEGEVKFEGDK.

His58 and His60 together coordinate Zn(2+). Substrate contacts are provided by residues 60–62 (HLR), Asn92, and Asn276. Asp303 is a binding site for Zn(2+). The active site involves Asp303. Substrate is bound by residues His307 and 321–322 (FG).

Belongs to the metallo-dependent hydrolases superfamily. DHOase family. Class I DHOase subfamily. Zn(2+) is required as a cofactor.

It catalyses the reaction (S)-dihydroorotate + H2O = N-carbamoyl-L-aspartate + H(+). It participates in pyrimidine metabolism; UMP biosynthesis via de novo pathway; (S)-dihydroorotate from bicarbonate: step 3/3. Functionally, catalyzes the reversible cyclization of carbamoyl aspartate to dihydroorotate. In Staphylococcus aureus (strain COL), this protein is Dihydroorotase.